Here is a 485-residue protein sequence, read N- to C-terminus: Glutamyl-tRNA(Gln) amidotransferase subunit A (485 aa).

Catalysis depends on charge relay system residues lysine 78 and serine 153. The Acyl-ester intermediate role is filled by serine 177.

It belongs to the amidase family. GatA subfamily. Heterotrimer of A, B and C subunits.

It carries out the reaction L-glutamyl-tRNA(Gln) + L-glutamine + ATP + H2O = L-glutaminyl-tRNA(Gln) + L-glutamate + ADP + phosphate + H(+). Functionally, allows the formation of correctly charged Gln-tRNA(Gln) through the transamidation of misacylated Glu-tRNA(Gln) in organisms which lack glutaminyl-tRNA synthetase. The reaction takes place in the presence of glutamine and ATP through an activated gamma-phospho-Glu-tRNA(Gln). In Bacillus cytotoxicus (strain DSM 22905 / CIP 110041 / 391-98 / NVH 391-98), this protein is Glutamyl-tRNA(Gln) amidotransferase subunit A.